A 77-amino-acid chain; its full sequence is Translation initiation factor IF-1, chloroplastic (77 aa).

The S1-like domain maps to 1 to 71 (MKEQKLIHEG…TKGRIIYRLR (71 aa)).

The protein belongs to the IF-1 family. As to quaternary structure, component of the 30S ribosomal translation pre-initiation complex which assembles on the 30S ribosome in the order IF-2 and IF-3, IF-1 and N-formylmethionyl-tRNA(fMet); mRNA recruitment can occur at any time during PIC assembly.

It localises to the plastid. The protein localises to the chloroplast. Its function is as follows. One of the essential components for the initiation of protein synthesis. Stabilizes the binding of IF-2 and IF-3 on the 30S subunit to which N-formylmethionyl-tRNA(fMet) subsequently binds. Helps modulate mRNA selection, yielding the 30S pre-initiation complex (PIC). Upon addition of the 50S ribosomal subunit IF-1, IF-2 and IF-3 are released leaving the mature 70S translation initiation complex. This is Translation initiation factor IF-1, chloroplastic from Dioscorea elephantipes (Elephant's foot yam).